Here is a 104-residue protein sequence, read N- to C-terminus: Circadian clock oscillator protein KaiB (104 aa).

It belongs to the KaiB family. As to quaternary structure, the KaiABC complex composition changes during the circadian cycle to control KaiC phosphorylation. Complexes KaiC(6), KaiA(2-4):KaiC(6), KaiB(6):KaiC(6) and KaiC(6):KaiB(6):KaiA(12) are among the most important forms, many form cooperatively. Undergoes a major conformational rearrangment; in the free state forms homotetramers as a dimer of dimers. When bound to the CI domain of KaiC switches to a monomeric thioredoxin-fold (KaiB(fs)). KaiB(fs) binds CikA, leading it to dephosphorylate phospho-RpaA.

In terms of biological role, key component of the KaiABC oscillator complex, which constitutes the main circadian regulator in cyanobacteria. Complex composition changes during the circadian cycle to control KaiC phosphorylation. KaiA stimulates KaiC autophosphorylation, while KaiB sequesters KaiA, leading to KaiC autodephosphorylation. Phospho-Ser-431 KaiC accumulation triggers binding of KaiB to form the KaiB(6):KaiC(6) complex, leading to changes in output regulators CikA and SasA. KaiB switches to a thioredoxin-like fold (KaiB(fs)) when bound to KaiC. KaiB(6):KaiC(6) formation exposes a site for KaiA binding that sequesters KaiA from KaiC, making the KaiC(6):KaiB(6):KaiA(12) complex that results in KaiC autodephosphorylation. A metamorphic protein which reversibly switches between an inactive tetrameric fold and a rare, thioredoxin-like monomeric fold (KaiB(fs)). KaiB(fs) binds phospho-KaiC, KaiA and CikA. KaiA and CikA compete for binding to KaiB(fs), and KaiB(fs) and SasA compete for binding to KaiC, thus the clock oscillator and output signal pathway are tightly coupled. The polypeptide is Circadian clock oscillator protein KaiB (Acaryochloris marina (strain MBIC 11017)).